The following is a 1369-amino-acid chain: Rho guanine nucleotide exchange factor 10 (1369 aa).

The tract at residues 1-106 is disordered; the sequence is MRPPGFLSRA…ETTPVAEPTK (106 aa). The segment covering 46–64 has biased composition (acidic residues); that stretch reads NNEEEEGEQFDFDSGDEIP. Positions 83-100 are enriched in low complexity; that stretch reads EAPAPTGGEDGAGAETTP. Residue serine 180 is modified to Phosphoserine. Residues 184–254 are disordered; the sequence is EAETPEVTED…ENSDSEPDEM (71 aa). Polar residues predominate over residues 196-209; the sequence is PNSLSSEEPPTSED. Residues 304-355 are a coiled coil; it reads KKQLSHDLTRLKEHYEKKMRDLMASTVGVVEIQQLRQKHELKMQKLVKAAKD. Serine 379 is modified (phosphoserine). Residues 421–608 enclose the DH domain; it reads VRRYILGSVV…ETLAEKLNER (188 aa). Disordered stretches follow at residues 1226-1260 and 1277-1297; these read KDKS…LSQG and QKSD…SSSL. The span at 1279–1296 shows a compositional bias: low complexity; the sequence is SDLSSSSGSLSLSHGSSS. Residue serine 1287 is modified to Phosphoserine. Residue glutamine 1338 is modified to N5-methylglutamine.

In terms of processing, methylated at Gln-1338 by N6AMT1.

May play a role in developmental myelination of peripheral nerves. The chain is Rho guanine nucleotide exchange factor 10 (ARHGEF10) from Homo sapiens (Human).